Reading from the N-terminus, the 146-residue chain is Large ribosomal subunit protein bL9 (146 aa).

It belongs to the bacterial ribosomal protein bL9 family.

Binds to the 23S rRNA. This Deinococcus geothermalis (strain DSM 11300 / CIP 105573 / AG-3a) protein is Large ribosomal subunit protein bL9.